The sequence spans 779 residues: Glutathione biosynthesis bifunctional protein GshAB (779 aa).

The interval 1-346 is glutamate--cysteine ligase; it reads MAFSKNILDS…ETANRNQEQA (346 aa). The ATP-grasp domain maps to 512–768; it reads KKILDQAGIN…LDDKILDALG (257 aa). 539 to 597 contributes to the ATP binding site; it reads PYYRGRAIVIKPKSTNFGIGITIIKENNRHDFFAQGIAQAFKHEATVLIENFSSGKEYR. The Mg(2+) site is built by Asp719, Glu738, and Asn740. Residues Asp719, Glu738, and Asn740 each contribute to the Mn(2+) site.

This sequence in the N-terminal section; belongs to the glutamate--cysteine ligase type 1 family. Type 2 subfamily. As to quaternary structure, monomer. Mg(2+) serves as cofactor. Mn(2+) is required as a cofactor.

The catalysed reaction is L-cysteine + L-glutamate + ATP = gamma-L-glutamyl-L-cysteine + ADP + phosphate + H(+). The enzyme catalyses gamma-L-glutamyl-L-cysteine + glycine + ATP = glutathione + ADP + phosphate + H(+). Its pathway is sulfur metabolism; glutathione biosynthesis; glutathione from L-cysteine and L-glutamate: step 1/2. The protein operates within sulfur metabolism; glutathione biosynthesis; glutathione from L-cysteine and L-glutamate: step 2/2. Its function is as follows. Synthesizes glutathione from L-glutamate and L-cysteine via gamma-L-glutamyl-L-cysteine. In Desulfotalea psychrophila (strain LSv54 / DSM 12343), this protein is Glutathione biosynthesis bifunctional protein GshAB.